Consider the following 131-residue polypeptide: MRHYEIVFMVHPDQSEQVPGMIERYTGVITEANGTIHRLEDWGRRQLAYPILDLHKAHYVLMNVEAKAETIEELETAFRFNDAVLRNMVMRTKVAVTEASPMAKARDERDSRRGPAGERSYDEAHAEEIAE.

A disordered region spans residues threonine 97–glutamate 131. Over residues lysine 104–glutamate 131 the composition is skewed to basic and acidic residues.

It belongs to the bacterial ribosomal protein bS6 family.

Binds together with bS18 to 16S ribosomal RNA. The sequence is that of Small ribosomal subunit protein bS6 from Shewanella baltica (strain OS223).